A 166-amino-acid chain; its full sequence is Regulatory protein RecX (166 aa).

This sequence belongs to the RecX family.

Its subcellular location is the cytoplasm. Modulates RecA activity. In Shigella dysenteriae serotype 1 (strain Sd197), this protein is Regulatory protein RecX.